The sequence spans 147 residues: Large ribosomal subunit protein uL13 (147 aa).

The protein belongs to the universal ribosomal protein uL13 family. Part of the 50S ribosomal subunit.

This protein is one of the early assembly proteins of the 50S ribosomal subunit, although it is not seen to bind rRNA by itself. It is important during the early stages of 50S assembly. The protein is Large ribosomal subunit protein uL13 of Levilactobacillus brevis (strain ATCC 367 / BCRC 12310 / CIP 105137 / JCM 1170 / LMG 11437 / NCIMB 947 / NCTC 947) (Lactobacillus brevis).